A 310-amino-acid chain; its full sequence is Methionyl-tRNA formyltransferase (310 aa).

109–112 contacts (6S)-5,6,7,8-tetrahydrofolate; the sequence is SLLP.

Belongs to the Fmt family.

The catalysed reaction is L-methionyl-tRNA(fMet) + (6R)-10-formyltetrahydrofolate = N-formyl-L-methionyl-tRNA(fMet) + (6S)-5,6,7,8-tetrahydrofolate + H(+). Attaches a formyl group to the free amino group of methionyl-tRNA(fMet). The formyl group appears to play a dual role in the initiator identity of N-formylmethionyl-tRNA by promoting its recognition by IF2 and preventing the misappropriation of this tRNA by the elongation apparatus. The protein is Methionyl-tRNA formyltransferase of Alkaliphilus oremlandii (strain OhILAs) (Clostridium oremlandii (strain OhILAs)).